The primary structure comprises 68 residues: Medusin-AS (68 aa).

The signal sequence occupies residues 1–22; that stretch reads MAFLKKSLFLVLFLGLVSLSVC. The propeptide occupies 23–49; that stretch reads EEEKRESEEEKNEQEEDDRDERSEEKR. The segment at 24–46 is disordered; the sequence is EEKRESEEEKNEQEEDDRDERSE. The span at 31–41 shows a compositional bias: acidic residues; the sequence is EEKNEQEEDDR. At Leu67 the chain carries Leucine amide.

This sequence belongs to the frog skin active peptide (FSAP) family. Medusin subfamily. In terms of tissue distribution, expressed by the skin glands.

It localises to the secreted. Antimicrobial peptide active against Gram-positive bacteria and fungi but inactive against Gram-negative bacteria. Also inhibits growth of B.dendrobatidis zoospores at high concentrations. Shows anticancer activities. Shows hemolytic activity. The polypeptide is Medusin-AS (Agalychnis spurrelli (Gliding leaf frog)).